The sequence spans 648 residues: Golgin subfamily A member 8G (648 aa).

Residues 1-11 (MWPQARLPPHP) show a composition bias toward pro residues. Disordered stretches follow at residues 1-84 (MWPQ…SATL) and 119-139 (NKQV…KQKA). Positions 50-62 (TNGSIHETATSGG) are enriched in polar residues. Coiled-coil stretches lie at residues 105–160 (VSQL…LNTD), 223–275 (LEQS…MSQE), and 318–424 (EVEL…QQKQ). Basic and acidic residues predominate over residues 121-139 (QVEHQLEEEKKANNEKQKA). Disordered regions lie at residues 356–376 (LREQ…QEER), 434–461 (ALPG…SIPQ), 508–549 (PITK…GVAA), and 600–624 (PVQG…QDHQ). Residues 441-453 (GGGHLDSEGEEAP) are compositionally biased toward basic and acidic residues. Over residues 521–534 (PGGGHHQAGPGQGG) the composition is skewed to gly residues.

It belongs to the GOLGA8 family.

The polypeptide is Golgin subfamily A member 8G (Homo sapiens (Human)).